The following is a 254-amino-acid chain: MELIDKIKMSVKDLDLFYGDKQALKKINMDIKENKVTALIGPSGCGKSTFIRTLNRMNDLIEDVTIKGNISVDGEDIYTSDDVINLRTKVGMVFQKPNPFPMSIYDNVAYGPRTHGLRDKKQLDKIVEESLKGAAIWDEVKDRLKSSALGLSGGQQQRICIARAIAMRPEVILMDEPTSALDPISTLKVEELIEDLKKDYTIVIVTHNMQQAARISDETAFFLNGEVIEFSDTKTMFTTPVDKRTEDYITGRFG.

The ABC transporter domain maps to 9 to 249 (MSVKDLDLFY…PVDKRTEDYI (241 aa)). An ATP-binding site is contributed by 41–48 (GPSGCGKS).

This sequence belongs to the ABC transporter superfamily. Phosphate importer (TC 3.A.1.7) family. In terms of assembly, the complex is composed of two ATP-binding proteins (PstB), two transmembrane proteins (PstC and PstA) and a solute-binding protein (PstS).

The protein localises to the cell membrane. The catalysed reaction is phosphate(out) + ATP + H2O = ADP + 2 phosphate(in) + H(+). In terms of biological role, part of the ABC transporter complex PstSACB involved in phosphate import. Responsible for energy coupling to the transport system. The protein is Phosphate import ATP-binding protein PstB of Clostridioides difficile (strain 630) (Peptoclostridium difficile).